A 448-amino-acid polypeptide reads, in one-letter code: Argininosuccinate synthase (448 aa).

ATP is bound by residues 17–25 (AFSGGLDTS) and Ala-43. Position 99 (Tyr-99) interacts with L-citrulline. 2 residues coordinate ATP: Gly-129 and Thr-131. Residues Thr-131, Asn-135, and Asp-136 each coordinate L-aspartate. An L-citrulline-binding site is contributed by Asn-135. Asp-136 lines the ATP pocket. Arg-139 and Ser-192 together coordinate L-citrulline. Asp-194 provides a ligand contact to ATP. Positions 201, 203, and 280 each coordinate L-citrulline.

It belongs to the argininosuccinate synthase family. Type 2 subfamily. In terms of assembly, homotetramer.

Its subcellular location is the cytoplasm. The enzyme catalyses L-citrulline + L-aspartate + ATP = 2-(N(omega)-L-arginino)succinate + AMP + diphosphate + H(+). Its pathway is amino-acid biosynthesis; L-arginine biosynthesis; L-arginine from L-ornithine and carbamoyl phosphate: step 2/3. The polypeptide is Argininosuccinate synthase (Acidovorax ebreus (strain TPSY) (Diaphorobacter sp. (strain TPSY))).